The primary structure comprises 80 residues: UPF0291 protein LACR_1198 (80 aa).

It belongs to the UPF0291 family.

The protein localises to the cytoplasm. The polypeptide is UPF0291 protein LACR_1198 (Lactococcus lactis subsp. cremoris (strain SK11)).